The following is an 892-amino-acid chain: Zinc finger protein 512B (892 aa).

The interval 1–82 (MTDPFCVGGR…KKGRPKAENQ (82 aa)) is disordered. The span at 8 to 19 (GGRRLPGSSKSG) shows a compositional bias: low complexity. The segment at 105–129 (VKCPNSGCWLEFPSIYGLKYHYQRC) adopts a C2H2-type 1; atypical zinc-finger fold. The segment at 140–163 (FPCPFCEAAFTSKTQLEKHRIWNH) adopts a C2H2-type 2 zinc-finger fold. Disordered regions lie at residues 323–473 (MVLL…RKKV) and 562–582 (EHSAKPSDAEASEGGEQEERE). Residues 371 to 384 (SMGQSSAFQLSADT) show a composition bias toward polar residues. Residues 385-398 (SSGSLSPGSRPSGG) are compositionally biased toward low complexity. Position 409 is a phosphoserine (S409). A compositionally biased stretch (basic residues) spans 418-428 (TKHRRKQKTPK). Residues 421–427 (RRKQKTP) carry the NuRD interaction motif motif. The C2H2-type 3 zinc finger occupies 540 to 563 (LKCQHCRKQFKSKAGLNYHTMAEH). Residues 594–618 (LRCPQEGCGAAFSSLMGYQYHQRRC) form a C2H2-type 4; atypical zinc finger. The C2H2-type 5 zinc finger occupies 630-653 (FPCTHCGKTYRSKAGHDYHVRSEH). Residues 649 to 682 (VRSEHTAPPPEEPTDKSPEAEDPLGVERTPSGRV) form a disordered region. S686 bears the Phosphoserine mark. Residues 750–774 (VNCPNDCCEAIYSSVSGLKAHLASC) form a C2H2-type 6; atypical zinc finger. The C2H2-type 7 zinc finger occupies 784–807 (YRCLLCPKEFSSESGVKYHILKTH). Residues 812–892 (FRTSADPPPK…KVGVSKAPEK (81 aa)) form a disordered region. A compositionally biased stretch (basic and acidic residues) spans 819-831 (PPKHRSQDSLVPK). A compositionally biased stretch (basic residues) spans 832-849 (KEKKKNLAGGKKRGRKPK). Basic and acidic residues predominate over residues 850-876 (ERTPEEPVAKLPPRRDDWPPGCRDKGA).

Belongs to the krueppel C2H2-type zinc-finger protein family. As to quaternary structure, interacts (via its NuRD interaction motif) with RBBP4 of the nucleosome remodeling and deacetylase (NuRD) complex; the interaction is direct and may play a role in repressing gene expression.

The protein localises to the nucleus. In terms of biological role, involved in transcriptional regulation by repressing gene expression. Associates with the nucleosome remodeling and histone deacetylase (NuRD) complex, which promotes transcriptional repression by histone deacetylation and nucleosome remodeling. The chain is Zinc finger protein 512B (ZNF512B) from Homo sapiens (Human).